The sequence spans 225 residues: uncharacterized protein (225 aa).

Belongs to the mimivirus L31/R44 family.

This is an uncharacterized protein from Acanthamoeba polyphaga (Amoeba).